Reading from the N-terminus, the 527-residue chain is Cyclin-L1 (527 aa).

A disordered region spans residues 1–37; the sequence is MASGPHPTSTAAAASASSAAPSAGGSSSGTTTTTTTT. Cyclin-like stretches follow at residues 89 to 191 and 204 to 288; these read ELIQ…RVLK and KIIV…ETLR. Thr-326 carries the phosphothreonine modification. The interval 327–527 is disordered; sequence PALSTLGGFS…SRSGHGRHRR (201 aa). Phosphoserine occurs at positions 336 and 339. Residues Lys-340 and Lys-348 each participate in a glycyl lysine isopeptide (Lys-Gly) (interchain with G-Cter in SUMO2) cross-link. Positions 343 to 353 are enriched in basic and acidic residues; the sequence is SPREVKAEEKS. Residues Ser-353 and Ser-356 each carry the phosphoserine modification. Residues 362-371 show a composition bias toward basic and acidic residues; sequence VKKEPEDRQQ. Residue Lys-363 forms a Glycyl lysine isopeptide (Lys-Gly) (interchain with G-Cter in SUMO2) linkage. The residue at position 375 (Ser-375) is a Phosphoserine. 4 stretches are compositionally biased toward basic residues: residues 383–419, 439–453, 461–477, and 487–499; these read DSKR…RRSR, RRHH…KAKH, SNRH…RSQS, and KKHR…HRDR. The interval 391-433 is RS; it reads RSASRSRSRTRSRSRSHTPRRHYNNRRSRSGTYSSRSRSRSRS. Ser-446 is subject to Phosphoserine. Positions 500 to 509 are enriched in basic and acidic residues; the sequence is RERSRSFERS. A compositionally biased stretch (basic residues) spans 510–527; sequence HKGKHHGGSRSGHGRHRR.

This sequence belongs to the cyclin family. Cyclin L subfamily. As to quaternary structure, interacts with POLR2A via its hyperphosphorylated C-terminal domain (CTD). Interacts with CDK11A, CDK11B, CDK12 and CDK13. May form a ternary complex with CDK11B and casein kinase II (CKII). Interacts with pre-mRNA-splicing factors, including at least SRSF1, SRSF2 AND SRSF7/SLU7. As to expression, ubiquitous with higher level in liver; expressed in striatal neurons.

The protein resides in the nucleus speckle. It is found in the nucleus. It localises to the nucleoplasm. In terms of biological role, involved in pre-mRNA splicing. Functions in association with cyclin-dependent kinases (CDKs). May play a role in the regulation of RNA polymerase II (pol II). Inhibited by the CDK-specific inhibitor CDKN1A/p21. This chain is Cyclin-L1 (Ccnl1), found in Rattus norvegicus (Rat).